We begin with the raw amino-acid sequence, 475 residues long: Ribulose bisphosphate carboxylase large chain (475 aa).

Positions 1–2 are excised as a propeptide; sequence MS. Pro3 is modified (N-acetylproline). Lys14 bears the N6,N6,N6-trimethyllysine mark. Substrate-binding residues include Asn123 and Thr173. Lys175 (proton acceptor) is an active-site residue. Position 177 (Lys177) interacts with substrate. Residues Lys201, Asp203, and Glu204 each coordinate Mg(2+). Lys201 is subject to N6-carboxylysine. The Proton acceptor role is filled by His294. Arg295, His327, and Ser379 together coordinate substrate.

Belongs to the RuBisCO large chain family. Type I subfamily. As to quaternary structure, heterohexadecamer of 8 large chains and 8 small chains; disulfide-linked. The disulfide link is formed within the large subunit homodimers. The cofactor is Mg(2+). In terms of processing, the disulfide bond which can form in the large chain dimeric partners within the hexadecamer appears to be associated with oxidative stress and protein turnover.

Its subcellular location is the plastid. The protein localises to the chloroplast. The catalysed reaction is 2 (2R)-3-phosphoglycerate + 2 H(+) = D-ribulose 1,5-bisphosphate + CO2 + H2O. The enzyme catalyses D-ribulose 1,5-bisphosphate + O2 = 2-phosphoglycolate + (2R)-3-phosphoglycerate + 2 H(+). RuBisCO catalyzes two reactions: the carboxylation of D-ribulose 1,5-bisphosphate, the primary event in carbon dioxide fixation, as well as the oxidative fragmentation of the pentose substrate in the photorespiration process. Both reactions occur simultaneously and in competition at the same active site. The chain is Ribulose bisphosphate carboxylase large chain from Bouvardia ternifolia (Firecrackerbush).